Consider the following 197-residue polypeptide: Probable nicotinate-nucleotide adenylyltransferase (197 aa).

The protein belongs to the NadD family.

It carries out the reaction nicotinate beta-D-ribonucleotide + ATP + H(+) = deamido-NAD(+) + diphosphate. The protein operates within cofactor biosynthesis; NAD(+) biosynthesis; deamido-NAD(+) from nicotinate D-ribonucleotide: step 1/1. Functionally, catalyzes the reversible adenylation of nicotinate mononucleotide (NaMN) to nicotinic acid adenine dinucleotide (NaAD). This Porphyromonas gingivalis (strain ATCC 33277 / DSM 20709 / CIP 103683 / JCM 12257 / NCTC 11834 / 2561) protein is Probable nicotinate-nucleotide adenylyltransferase.